Reading from the N-terminus, the 490-residue chain is Beta-glucosidase 42 (490 aa).

A beta-D-glucoside contacts are provided by residues Q35, H137, 182–183 (NE), Y317, and E388. The active-site Proton donor is E183. The active-site Nucleophile is E388. The N-linked (GlcNAc...) asparagine glycan is linked to N420. A beta-D-glucoside-binding positions include W437, 444-445 (EW), and F453.

Belongs to the glycosyl hydrolase 1 family. In terms of tissue distribution, expressed at low levels predominantly in root epidermal cells.

The enzyme catalyses Hydrolysis of terminal, non-reducing beta-D-glucosyl residues with release of beta-D-glucose.. Functionally, glucosidase that hydrolyzes scopolin and various beta-glucosides, cellooligosaccharides (mainly cellotriose) and laminarioligosaccharides. Can use p-nitrophenyl-beta-glucosides (pNP beta-Glc) and p-nitrophenyl-beta-D-fucosides (pNP beta-D-Fuc) as substrates, and, to a lower extent, beta-galactosides, beta-mannosides and beta-xylosides. Involved in the secretion of root-derived phenolics upon iron ions (Fe) depletion. Promotes disease resistance toward B.cinerea, H.arabidopsidis and P.syringae pv. tomato DC3000. Required during rhizobacteria-mediated (e.g. P.fluorescens WCS417r) broad-spectrum induced systemic resistance (ISR) against several pathogens. The polypeptide is Beta-glucosidase 42 (Arabidopsis thaliana (Mouse-ear cress)).